Consider the following 333-residue polypeptide: Biotin synthase (333 aa).

The region spanning 47 to 276 (FFKNQMEFCS…KSEIRLCGGR (230 aa)) is the Radical SAM core domain. Residues Cys65, Cys69, and Cys72 each contribute to the [4Fe-4S] cluster site. Cys109, Cys141, Cys201, and Arg271 together coordinate [2Fe-2S] cluster.

It belongs to the radical SAM superfamily. Biotin synthase family. In terms of assembly, homodimer. It depends on [4Fe-4S] cluster as a cofactor. Requires [2Fe-2S] cluster as cofactor.

The catalysed reaction is (4R,5S)-dethiobiotin + (sulfur carrier)-SH + 2 reduced [2Fe-2S]-[ferredoxin] + 2 S-adenosyl-L-methionine = (sulfur carrier)-H + biotin + 2 5'-deoxyadenosine + 2 L-methionine + 2 oxidized [2Fe-2S]-[ferredoxin]. The protein operates within cofactor biosynthesis; biotin biosynthesis; biotin from 7,8-diaminononanoate: step 2/2. In terms of biological role, catalyzes the conversion of dethiobiotin (DTB) to biotin by the insertion of a sulfur atom into dethiobiotin via a radical-based mechanism. This Sulfurihydrogenibium sp. (strain YO3AOP1) protein is Biotin synthase.